Consider the following 257-residue polypeptide: Isoprenyl transferase (257 aa).

D37 is an active-site residue. D37 provides a ligand contact to Mg(2+). Substrate is bound by residues 38–41 (GNGR), W42, R50, H54, and 82–84 (STE). The active-site Proton acceptor is N85. Substrate-binding positions include W86, R88, R205, and 211-213 (RLS). Residue E224 participates in Mg(2+) binding.

It belongs to the UPP synthase family. As to quaternary structure, homodimer. Mg(2+) is required as a cofactor.

Its function is as follows. Catalyzes the condensation of isopentenyl diphosphate (IPP) with allylic pyrophosphates generating different type of terpenoids. In Shouchella clausii (strain KSM-K16) (Alkalihalobacillus clausii), this protein is Isoprenyl transferase.